The primary structure comprises 215 residues: Adenylate kinase (215 aa).

10–15 serves as a coordination point for ATP; the sequence is GAGKGT. The segment at 30-59 is NMP; the sequence is STGDMLRAAVKAGTELGLIAKSVMDSGGLV. AMP is bound by residues Thr31, Arg36, 57–59, 85–88, and Gln92; these read GLV and GFPR. The segment at 122–159 is LID; it reads GRRVHEASGRVYHTVYNPPKVEGKDDVTGDDLVQRKDD. ATP-binding positions include Arg123 and 132–133; that span reads VY. 2 residues coordinate AMP: Arg156 and Arg167. Position 201 (Gly201) interacts with ATP.

It belongs to the adenylate kinase family. As to quaternary structure, monomer.

The protein resides in the cytoplasm. The catalysed reaction is AMP + ATP = 2 ADP. It participates in purine metabolism; AMP biosynthesis via salvage pathway; AMP from ADP: step 1/1. In terms of biological role, catalyzes the reversible transfer of the terminal phosphate group between ATP and AMP. Plays an important role in cellular energy homeostasis and in adenine nucleotide metabolism. This Pseudomonas fluorescens (strain SBW25) protein is Adenylate kinase.